The sequence spans 183 residues: MNGDETKKVESEYIKKHHRHELVESQCSSTLVKHIKAPLHLVWSIVRRFDEPQKYKPFISRCVVQGKKLEVGSVREVDLKSGLPATKSTEVLEILDDNEHILGIRIVGGDHRLKNYSSTISLHSETIDGKTGTLAIESFVVDVPEGNTKEETCFFVEALIQCNLNSLADVTERLQAESMEKKI.

Residues 20–172 (HELVESQCSS…NLNSLADVTE (153 aa)) form an START-like region. A disulfide bridge connects residues Cys27 and Cys153. Abscisate is bound by residues Lys56, 85–90 (ATKSTE), 112–118 (RLKNYSS), and Glu137. Residues 81–85 (SGLPA) carry the Gate loop motif. The Latch loop motif lies at 111 to 113 (HRL).

Belongs to the PYR/PYL/RCAR abscisic acid intracellular receptor family. In terms of assembly, monomer. Forms heterodimer with PYL13, thus antagonizing PP2Cs-binding and ABA-independent inhibition of PP2Cs. Homodimer. Binds ABA on one subunit only. Binds to CARs protein in an ABA-independent manner, both at the plasma membrane and in the nucleus. Interacts with ABI1 and HAB1, and possibly with other PP2Cs, in an ABA-independent manner.

The protein resides in the cytoplasm. It is found in the nucleus. The protein localises to the cell membrane. Functionally, receptor for abscisic acid (ABA) required for ABA-mediated responses such as stomatal closure and germination inhibition. Inhibits the activity of group-A protein phosphatases type 2C (PP2Cs) in an ABA-independent manner but more efficiently when activated by ABA. Can be activated by both (-)-ABA and (+)-ABA. This chain is Abscisic acid receptor PYL10 (PYL10), found in Arabidopsis thaliana (Mouse-ear cress).